The chain runs to 257 residues: Zinc import ATP-binding protein ZnuC (257 aa).

Residues 6 to 221 (IRLDQVGVTF…PAFVELFGKT (216 aa)) enclose the ABC transporter domain. An ATP-binding site is contributed by 38-45 (GPNGAGKT).

It belongs to the ABC transporter superfamily. Zinc importer (TC 3.A.1.15.5) family. The complex is composed of two ATP-binding proteins (ZnuC), two transmembrane proteins (ZnuB) and a solute-binding protein (ZnuA).

The protein resides in the cell inner membrane. The enzyme catalyses Zn(2+)(out) + ATP(in) + H2O(in) = Zn(2+)(in) + ADP(in) + phosphate(in) + H(+)(in). Part of the ABC transporter complex ZnuABC involved in zinc import. Responsible for energy coupling to the transport system. The sequence is that of Zinc import ATP-binding protein ZnuC from Pseudomonas putida (strain ATCC 47054 / DSM 6125 / CFBP 8728 / NCIMB 11950 / KT2440).